Here is a 397-residue protein sequence, read N- to C-terminus: Lysophospholipid transporter LplT (397 aa).

The Periplasmic segment spans residues 1 to 17; it reads MSESVHTNTSLWSKGMK. A helical transmembrane segment spans residues 18–38; it reads AVIVAQFLSAFGDNALLFATL. The Cytoplasmic segment spans residues 39 to 52; it reads ALLKAQFYPEWSQP. The chain crosses the membrane as a helical span at residues 53-73; that stretch reads VLQMVFVGAYILFAPFVGQVA. Over 74–90 the chain is Periplasmic; sequence DSFAKGRVMMFANGLKL. A helical transmembrane segment spans residues 91–111; sequence LGAASICFGFNPFVGYTLVGI. Over 112–144 the chain is Cytoplasmic; it reads GAAAYSPAKYGILGELTTGDKLVKANGLMEAST. A helical transmembrane segment spans residues 145-165; sequence IAAILLGSVAGGVLADLHVLV. A topological domain (periplasmic) is located at residue Ala166. A helical membrane pass occupies residues 167-187; the sequence is LAACALAYAGAVAANIYIPKL. Over 188 to 226 the chain is Cytoplasmic; that stretch reads AAARPGQSWNVLKMTCSFKSACTSLWQNGETRFSLVGTS. A helical membrane pass occupies residues 227-247; it reads LFWGAGVTLRFLLVLWVPVAL. Topologically, residues 248–256 are periplasmic; it reads GITDNATPT. A helical membrane pass occupies residues 257–277; sequence YLNAMVAIGIVLGAGAAAKLV. Over 278–280 the chain is Cytoplasmic; the sequence is TLE. A helical transmembrane segment spans residues 281–301; it reads TVSRCMPAGILIGVVVLFFSL. Residues 302 to 304 lie on the Periplasmic side of the membrane; sequence QHE. A helical transmembrane segment spans residues 305–325; that stretch reads LLPAYALLMLIGVLGGFFVVP. At 326–343 the chain is on the cytoplasmic side; it reads LNALLQERGKKSVGAGNA. The helical transmembrane segment at 344-364 threads the bilayer; it reads IAVQNLGENSAMLLMLGIYSL. The Periplasmic portion of the chain corresponds to 365–366; the sequence is AV. Residues 367–387 form a helical membrane-spanning segment; sequence LVGIPVVPIGIGFGTLFALAI. At 388 to 397 the chain is on the cytoplasmic side; sequence TALWIWQRRH.

Belongs to the major facilitator superfamily. LplT (TC 2.A.1.42) family.

It localises to the cell inner membrane. Its function is as follows. Catalyzes the facilitated diffusion of 2-acyl-glycero-3-phosphoethanolamine (2-acyl-GPE) into the cell. The polypeptide is Lysophospholipid transporter LplT (Escherichia fergusonii (strain ATCC 35469 / DSM 13698 / CCUG 18766 / IAM 14443 / JCM 21226 / LMG 7866 / NBRC 102419 / NCTC 12128 / CDC 0568-73)).